Consider the following 282-residue polypeptide: MHCSSPKMVCETKIVADEHEAIAGTKKDSIIVSSSQMWTSSSASPSALESKIEKRNQVFIREFERSDHEEVRRIFNEGIMERIPNSAFRGLKQQTTTQFMYAFLTVMCYVMTKSFTLTFCAPFILMGARYYYSRKVILSYLDCALHTDMADIEAYYMKPTGSCFWVAVLQGQVVGIVAAQSREDDNTVELRRMSVDSHFRGKGIAKALGRRVIEFAMLNNYSAVVLGTTAVKMAAHKLYESLGFRRVGETEDYTLPGMTRSPLERLFFQIRYSHYRLQLHEE.

Residues 103–125 (FLTVMCYVMTKSFTLTFCAPFIL) traverse the membrane as a helical segment. Residues 110 to 269 (VMTKSFTLTF…RSPLERLFFQ (160 aa)) form the N-acetyltransferase domain.

The protein belongs to the NAT8 family.

The protein resides in the cytoplasm. Its subcellular location is the microsome membrane. The protein localises to the mitochondrion membrane. It is found in the endoplasmic reticulum membrane. The enzyme catalyses L-aspartate + acetyl-CoA = N-acetyl-L-aspartate + CoA + H(+). In terms of biological role, catalyzes the synthesis of N-acetylaspartate acid (NAA) from L-aspartate and acetyl-CoA. This chain is N-acetylaspartate synthetase (nat8l), found in Danio rerio (Zebrafish).